A 499-amino-acid polypeptide reads, in one-letter code: MMVAWWSLFLYGLQVAAPALAATPADWRSQSIYFLLTDRFARTDGSTTATCNTADQKYCGGTWQGIIDKLDYIQGMGFTAIWITPVTAQLPQTTAYGDAYHGYWQQDIYSLNENYGTADDLKALSSALHERGMYLMVDVVANHMGYDGAGSSVDYSVFKPFSSQDYFHPFCFIQNYEDQTQVEDCWLGDNTVSLPDLDTTKDVVKNEWYDWVGSLVSNYSIDGLRIDTVKHVQKDFWPGYNKAAGVYCIGEVLDGDPAYTCPYQNVMDGVLNYPIYYPLLNAFKSTSGSMDDLYNMINTVKSDCPDSTLLGTFVENHDNPRFASYTNDIALAKNVAAFIILNDGIPIIYAGQEQHYAGGNDPANREATWLSGYPTDSELYKLIASANAIRNYAISKDTGFVTYKNWPIYKDDTTIAMRKGTDGSQIVTILSNKGASGDSYTLSLSGAGYTAGQQLTEVIGCTTVTVGSDGNVPVPMAGGLPRVLYPTEKLAGSKICSSS.

Residues 1-21 (MMVAWWSLFLYGLQVAAPALA) form the signal peptide. An intrachain disulfide couples Cys51 to Cys59. The substrate site is built by Gln56 and Trp104. Ca(2+) is bound at residue Asn142. His143 contacts substrate. Cys171 and Cys185 are disulfide-bonded. Residues Glu183 and Asp196 each contribute to the Ca(2+) site. The N-linked (GlcNAc...) asparagine glycan is linked to Asn218. Arg225 is a substrate binding site. Asp227, His231, and Glu251 together coordinate Ca(2+). Asp227 (nucleophile) is an active-site residue. 230–231 (KH) contacts substrate. Catalysis depends on Glu251, which acts as the Proton donor. Gly255 provides a ligand contact to substrate. Cys261 and Cys304 are joined by a disulfide. Asp318 and Arg365 together coordinate substrate. Cys461 and Cys496 are disulfide-bonded.

The protein belongs to the glycosyl hydrolase 13 family. As to quaternary structure, monomer. Requires Ca(2+) as cofactor.

It localises to the secreted. The catalysed reaction is Endohydrolysis of (1-&gt;4)-alpha-D-glucosidic linkages in polysaccharides containing three or more (1-&gt;4)-alpha-linked D-glucose units.. The chain is Alpha-amylase A type-1/2 (amy1) from Aspergillus oryzae (strain ATCC 42149 / RIB 40) (Yellow koji mold).